The following is a 402-amino-acid chain: Eukaryotic initiation factor 4A (402 aa).

A Q motif motif is present at residues 29–57; the sequence is ESFDDMELKEELLRGIYGFGFEKPSAIQK. In terms of domain architecture, Helicase ATP-binding spans 60-230; sequence IVPCTTGKDV…NRFMRNPIRI (171 aa). An ATP-binding site is contributed by 73–80; that stretch reads AQSGTGKT. Residues 178-181 carry the DEAD box motif; it reads DEAD. The region spanning 241–402 is the Helicase C-terminal domain; it reads GIRQFYINVQ…EMPESIADLI (162 aa).

It belongs to the DEAD box helicase family. eIF4A subfamily. As to quaternary structure, eIF4F is a multi-subunit complex, the composition of which varies with external and internal environmental conditions. It is composed of at least EIF4A, EIF4E and EIF4G.

It carries out the reaction ATP + H2O = ADP + phosphate + H(+). In terms of biological role, ATP-dependent RNA helicase which is a subunit of the eIF4F complex involved in cap recognition and is required for mRNA binding to ribosome. In the current model of translation initiation, eIF4A unwinds RNA secondary structures in the 5'-UTR of mRNAs which is necessary to allow efficient binding of the small ribosomal subunit, and subsequent scanning for the initiator codon. The chain is Eukaryotic initiation factor 4A (inf-1) from Caenorhabditis elegans.